Reading from the N-terminus, the 283-residue chain is NAD kinase (283 aa).

The active-site Proton acceptor is D66. NAD(+) is bound by residues 66–67 (DG), 137–138 (ND), R165, D167, and 178–183 (TGYSLS).

This sequence belongs to the NAD kinase family. Requires a divalent metal cation as cofactor.

It localises to the cytoplasm. The enzyme catalyses NAD(+) + ATP = ADP + NADP(+) + H(+). Its function is as follows. Involved in the regulation of the intracellular balance of NAD and NADP, and is a key enzyme in the biosynthesis of NADP. Catalyzes specifically the phosphorylation on 2'-hydroxyl of the adenosine moiety of NAD to yield NADP. The polypeptide is NAD kinase (Chloroherpeton thalassium (strain ATCC 35110 / GB-78)).